Here is a 122-residue protein sequence, read N- to C-terminus: Ferredoxin (122 aa).

Positions 1–33 (MSHDRRLTVGSLLPNQPRPVAVPKAPSVVQPSK) are disordered. Residues 8–14 (TVGSLLP) form a targeting peptide region. Residues 40–122 (AIIRLEQNGR…FRLACQANME (83 aa)) enclose the 2Fe-2S ferredoxin-type domain. [2Fe-2S] cluster-binding residues include cysteine 75, cysteine 80, cysteine 83, and cysteine 117.

The protein belongs to the 2Fe2S plant-type ferredoxin family. It depends on [2Fe-2S] cluster as a cofactor.

It localises to the encapsulin nanocompartment. Its function is as follows. Cargo protein of a type 1 encapsulin nanocompartment. An iron-binding protein probably involved in iron mineralization in the encapsulin nanocompartment. 2 different cargo proteins have been identified (IMEF and Fer); when both are expressed in E.coli with the shell protein only IMEF is detected within the nanocompartment. E.coli expressing all 3 genes stores the largest amount of iron and is protected from Fe/H2O2-induced oxidative stress. This chain is Ferredoxin, found in Bacillus thermotolerans (Quasibacillus thermotolerans).